The chain runs to 382 residues: uncharacterized protein (382 aa).

10 helical membrane-spanning segments follow: residues 8-28 (VLLL…LNTL), 41-61 (WQVG…TLIA), 73-93 (SYHC…LTVD), 94-114 (FWSW…IWVI), 133-153 (AAYM…LGIV), 157-177 (LLSV…PLLF), 208-228 (GCII…LYLS), 274-294 (VVIL…ALFI), 325-345 (ALLM…SLLM), and 349-369 (SDNL…MMLL).

It belongs to the major facilitator superfamily. YcaD (TC 2.A.1.26) family.

The protein localises to the cell inner membrane. This is an uncharacterized protein from Yersinia pseudotuberculosis serotype O:3 (strain YPIII).